The sequence spans 65 residues: Carboxypeptidase A inhibitor (65 aa).

This sequence belongs to the protease inhibitor I44 family.

It localises to the secreted. In terms of biological role, inhibits carboxypeptidase A. The polypeptide is Carboxypeptidase A inhibitor (Ascaris suum (Pig roundworm)).